Here is a 222-residue protein sequence, read N- to C-terminus: Pleckstrin homology domain-containing family B member 2 (222 aa).

One can recognise a PH domain in the interval 2–109 (AFVKSGWLLR…WKFTLQDSRT (108 aa)). Lys-20 provides a ligand contact to a 1,2-diacyl-sn-glycero-3-phospho-L-serine.

The protein resides in the recycling endosome membrane. Involved in retrograde transport of recycling endosomes. The protein is Pleckstrin homology domain-containing family B member 2 (PLEKHB2) of Homo sapiens (Human).